The primary structure comprises 201 residues: Oligoribonuclease (201 aa).

The Exonuclease domain occupies 5 to 169 (MVWIDCEMTG…ADIRDSITEL (165 aa)). The active site involves Y126.

This sequence belongs to the oligoribonuclease family.

The protein localises to the cytoplasm. 3'-to-5' exoribonuclease specific for small oligoribonucleotides. The protein is Oligoribonuclease of Streptomyces griseus.